We begin with the raw amino-acid sequence, 350 residues long: Ribosomal RNA large subunit methyltransferase M (350 aa).

Residues serine 184, 217–220 (APGG), aspartate 236, aspartate 256, and aspartate 272 contribute to the S-adenosyl-L-methionine site. Residue lysine 301 is the Proton acceptor of the active site.

The protein belongs to the class I-like SAM-binding methyltransferase superfamily. RNA methyltransferase RlmE family. RlmM subfamily. As to quaternary structure, monomer.

The protein resides in the cytoplasm. It carries out the reaction cytidine(2498) in 23S rRNA + S-adenosyl-L-methionine = 2'-O-methylcytidine(2498) in 23S rRNA + S-adenosyl-L-homocysteine + H(+). Its function is as follows. Catalyzes the 2'-O-methylation at nucleotide C2498 in 23S rRNA. The sequence is that of Ribosomal RNA large subunit methyltransferase M from Marinomonas sp. (strain MWYL1).